A 679-amino-acid polypeptide reads, in one-letter code: Methionine--tRNA ligase (679 aa).

Positions 14–24 (PYANGSIHLGH) match the 'HIGH' region motif. Zn(2+)-binding residues include cysteine 145, cysteine 148, cysteine 158, and cysteine 161. A 'KMSKS' region motif is present at residues 331–335 (KMSKS). Residue lysine 334 coordinates ATP. Residues 577-679 (TFAAVDLRVA…SGAKPGQRIK (103 aa)) form the tRNA-binding domain.

This sequence belongs to the class-I aminoacyl-tRNA synthetase family. MetG type 1 subfamily. Homodimer. Zn(2+) is required as a cofactor.

It is found in the cytoplasm. The catalysed reaction is tRNA(Met) + L-methionine + ATP = L-methionyl-tRNA(Met) + AMP + diphosphate. Is required not only for elongation of protein synthesis but also for the initiation of all mRNA translation through initiator tRNA(fMet) aminoacylation. The polypeptide is Methionine--tRNA ligase (Pseudomonas putida (strain ATCC 47054 / DSM 6125 / CFBP 8728 / NCIMB 11950 / KT2440)).